The primary structure comprises 418 residues: Beta-arrestin-1 (418 aa).

Residues 1-163 are interaction with SRC; the sequence is MGDKGTRVFK…LEEKIHKRNS (163 aa). The interaction with CHRM2 stretch occupies residues 45–86; the sequence is PEYLKERRVYVTLTCAFRYGREDLDVLGLTFRKDLFVANVQS. Phosphotyrosine is present on Tyr47. Residues Lys250, Met255, Lys324, and Lys326 each contribute to the 1D-myo-inositol hexakisphosphate site. Residues 318–418 form an interaction with TRAF6 region; sequence IVSYKVKVKL…GTGSPHLNNR (101 aa). 2 disordered regions span residues 353 to 375 and 397 to 418; these read HPKPKEEPPHREVPESETPVDTN and KGMKDDKDEEDDGTGSPHLNNR. Basic and acidic residues predominate over residues 355–366; sequence KPKEEPPHREVP. Ser412 carries the phosphoserine modification.

This sequence belongs to the arrestin family. Monomer. Homodimer. Homooligomer; the self-association is mediated by InsP6-binding. Heterooligomer with ARRB2; the association is mediated by InsP6-binding. Interacts with ADRB2 (phosphorylated). Interacts with CHRM2 (phosphorylated). Interacts with LHCGR. Interacts with CYTH2 and CASR. Interacts with AP2B1 (dephosphorylated); phosphorylation of AP2B1 disrupts the interaction. Interacts (dephosphorylated at Ser-412) with CLTC. Interacts with CCR2 and GRK2. Interacts with CRR5. Interacts with PTAFR (phosphorylated on serine residues). Interacts with CLTC and MAP2K3. Interacts with CREB1. Interacts with TRAF6. Interacts with IGF1R and MDM2. Interacts with C5AR1. Interacts with PDE4D. Interacts with SRC (via the SH3 domain and the protein kinase domain); the interaction is independent of the phosphorylation state of SRC C-terminus. Interacts with TACR1. Interacts with RAF1. Interacts with DVL1; the interaction is enhanced by phosphorylation of DVL1. Interacts with DVL2; the interaction is enhanced by phosphorylation of DVL2. Interacts with IGF1R. Interacts with CHUK, IKBKB and MAP3K14. Associates with MAP kinase p38. Part of a MAPK signaling complex consisting of TACR1, ARRB1, SRC, MAPK1 (activated) and MAPK3 (activated). Part of a MAPK signaling complex consisting of F2RL1, ARRB1, RAF1, MAPK1 (activated) and MAPK3 (activated). Interacts with GPR143. Interacts with MAP2K4/MKK4. Interacts with HCK and CXCR1 (phosphorylated). Interacts with ACKR3 and ACKR4. Interacts with ARRDC1; the interaction is direct. Interacts with GPR61, GPR62 and GPR135. Post-translationally, constitutively phosphorylated at in the cytoplasm. At the plasma membrane, is rapidly dephosphorylated, a process that is required for clathrin binding and ADRB2 endocytosis but not for ADRB2 binding and desensitization. Once internalized, is rephosphorylated. The ubiquitination status appears to regulate the formation and trafficking of beta-arrestin-GPCR complexes and signaling. Ubiquitination appears to occur GPCR-specific. Ubiquitinated by MDM2; the ubiquitination is required for rapid internalization of ADRB2. Deubiquitinated by USP33; the deubiquitination leads to a dissociation of the beta-arrestin-GPCR complex. Stimulation of a class A GPCR, such as ADRB2, induces transient ubiquitination and subsequently promotes association with USP33.

It is found in the cytoplasm. The protein localises to the nucleus. It localises to the cell membrane. The protein resides in the membrane. Its subcellular location is the clathrin-coated pit. It is found in the cell projection. The protein localises to the pseudopodium. It localises to the cytoplasmic vesicle. Functionally, functions in regulating agonist-mediated G-protein coupled receptor (GPCR) signaling by mediating both receptor desensitization and resensitization processes. During homologous desensitization, beta-arrestins bind to the GPRK-phosphorylated receptor and sterically preclude its coupling to the cognate G-protein; the binding appears to require additional receptor determinants exposed only in the active receptor conformation. The beta-arrestins target many receptors for internalization by acting as endocytic adapters (CLASPs, clathrin-associated sorting proteins) and recruiting the GPRCs to the adapter protein 2 complex 2 (AP-2) in clathrin-coated pits (CCPs). However, the extent of beta-arrestin involvement appears to vary significantly depending on the receptor, agonist and cell type. Internalized arrestin-receptor complexes traffic to intracellular endosomes, where they remain uncoupled from G-proteins. Two different modes of arrestin-mediated internalization occur. Class A receptors, like ADRB2, OPRM1, ENDRA, D1AR and ADRA1B dissociate from beta-arrestin at or near the plasma membrane and undergo rapid recycling. Class B receptors, like AVPR2, AGTR1, NTSR1, TRHR and TACR1 internalize as a complex with arrestin and traffic with it to endosomal vesicles, presumably as desensitized receptors, for extended periods of time. Receptor resensitization then requires that receptor-bound arrestin is removed so that the receptor can be dephosphorylated and returned to the plasma membrane. Involved in internalization of P2RY4 and UTP-stimulated internalization of P2RY2. Involved in phosphorylation-dependent internalization of OPRD1 ands subsequent recycling. Involved in the degradation of cAMP by recruiting cAMP phosphodiesterases to ligand-activated receptors. Beta-arrestins function as multivalent adapter proteins that can switch the GPCR from a G-protein signaling mode that transmits short-lived signals from the plasma membrane via small molecule second messengers and ion channels to a beta-arrestin signaling mode that transmits a distinct set of signals that are initiated as the receptor internalizes and transits the intracellular compartment. Acts as a signaling scaffold for MAPK pathways such as MAPK1/3 (ERK1/2). ERK1/2 activated by the beta-arrestin scaffold is largely excluded from the nucleus and confined to cytoplasmic locations such as endocytic vesicles, also called beta-arrestin signalosomes. Recruits c-Src/SRC to ADRB2 resulting in ERK activation. GPCRs for which the beta-arrestin-mediated signaling relies on both ARRB1 and ARRB2 (codependent regulation) include ADRB2, F2RL1 and PTH1R. For some GPCRs the beta-arrestin-mediated signaling relies on either ARRB1 or ARRB2 and is inhibited by the other respective beta-arrestin form (reciprocal regulation). Inhibits ERK1/2 signaling in AGTR1- and AVPR2-mediated activation (reciprocal regulation). Is required for SP-stimulated endocytosis of NK1R and recruits c-Src/SRC to internalized NK1R resulting in ERK1/2 activation, which is required for the antiapoptotic effects of SP. Is involved in proteinase-activated F2RL1-mediated ERK activity. Acts as a signaling scaffold for the AKT1 pathway. Is involved in alpha-thrombin-stimulated AKT1 signaling. Is involved in IGF1-stimulated AKT1 signaling leading to increased protection from apoptosis. Involved in activation of the p38 MAPK signaling pathway and in actin bundle formation. Involved in F2RL1-mediated cytoskeletal rearrangement and chemotaxis. Involved in AGTR1-mediated stress fiber formation by acting together with GNAQ to activate RHOA. Appears to function as signaling scaffold involved in regulation of MIP-1-beta-stimulated CCR5-dependent chemotaxis. Involved in attenuation of NF-kappa-B-dependent transcription in response to GPCR or cytokine stimulation by interacting with and stabilizing CHUK. May serve as nuclear messenger for GPCRs. Involved in OPRD1-stimulated transcriptional regulation by translocating to CDKN1B and FOS promoter regions and recruiting EP300 resulting in acetylation of histone H4. Involved in regulation of LEF1 transcriptional activity via interaction with DVL1 and/or DVL2 Also involved in regulation of receptors other than GPCRs. Involved in Toll-like receptor and IL-1 receptor signaling through the interaction with TRAF6 which prevents TRAF6 autoubiquitination and oligomerization required for activation of NF-kappa-B and JUN. Involved in IL8-mediated granule release in neutrophils. Binds phosphoinositides. Binds inositolhexakisphosphate (InsP6). Required for atypical chemokine receptor ACKR2-induced RAC1-LIMK1-PAK1-dependent phosphorylation of cofilin (CFL1) and for the up-regulation of ACKR2 from endosomal compartment to cell membrane, increasing its efficiency in chemokine uptake and degradation. Involved in the internalization of the atypical chemokine receptor ACKR3. Negatively regulates the NOTCH signaling pathway by mediating the ubiquitination and degradation of NOTCH1 by ITCH. Participates in the recruitment of the ubiquitin-protein ligase to the receptor. In Mus musculus (Mouse), this protein is Beta-arrestin-1 (Arrb1).